The primary structure comprises 490 residues: Tektin-3 (490 aa).

Thr-7, Thr-9, and Thr-11 each carry an O-linked (GalNAc...) threonine glycan. Residues Asn-41, Asn-86, Asn-111, and Asn-276 are each glycosylated (N-linked (GlcNAc...) asparagine). Positions 415–461 (MAQLRLVNEVYEVDETIQTLQQRLRDSEDTLQSLAHTKATLEHDLAV) form a coiled coil.

This sequence belongs to the tektin family. Microtubule inner protein component of sperm flagellar doublet microtubules. Interacts with TEKT1, TEKT2, TEKT4 and TEKT5. Interacts with CCDC38. N- and O-glycosylated. In terms of processing, ubiquitinated, leading to its degradation. Deubiquitinated by USP16, promoting its stability. Post-translationally, may be proteolytically processed during the epididymal transit of spermatozoa. In terms of tissue distribution, expressed preferentially in testis. Expressed predominantly in late pachytene spermatocytes and early round spermatids. Expressed in spermatozoa.

The protein resides in the cytoplasm. It is found in the cytoskeleton. The protein localises to the cilium axoneme. Its subcellular location is the flagellum axoneme. It localises to the cytoplasmic vesicle. The protein resides in the secretory vesicle. It is found in the acrosome outer membrane. Functionally, microtubule inner protein (MIP) part of the dynein-decorated doublet microtubules (DMTs) in cilia and flagellar axoneme. Forms filamentous polymers in the walls of ciliary and flagellar microtubules. Required for normal sperm mobility. The polypeptide is Tektin-3 (Tekt3) (Mus musculus (Mouse)).